Consider the following 509-residue polypeptide: Bifunctional purine biosynthesis protein PurH (509 aa).

Residues 1–144 (MKRALISVSD…KNYAAVTVVV (144 aa)) form the MGS-like domain.

This sequence belongs to the PurH family.

It catalyses the reaction (6R)-10-formyltetrahydrofolate + 5-amino-1-(5-phospho-beta-D-ribosyl)imidazole-4-carboxamide = 5-formamido-1-(5-phospho-D-ribosyl)imidazole-4-carboxamide + (6S)-5,6,7,8-tetrahydrofolate. It carries out the reaction IMP + H2O = 5-formamido-1-(5-phospho-D-ribosyl)imidazole-4-carboxamide. It functions in the pathway purine metabolism; IMP biosynthesis via de novo pathway; 5-formamido-1-(5-phospho-D-ribosyl)imidazole-4-carboxamide from 5-amino-1-(5-phospho-D-ribosyl)imidazole-4-carboxamide (10-formyl THF route): step 1/1. It participates in purine metabolism; IMP biosynthesis via de novo pathway; IMP from 5-formamido-1-(5-phospho-D-ribosyl)imidazole-4-carboxamide: step 1/1. This chain is Bifunctional purine biosynthesis protein PurH, found in Listeria monocytogenes serotype 4b (strain CLIP80459).